Here is a 74-residue protein sequence, read N- to C-terminus: Porwaprin-a (74 aa).

Residues 1–24 (MSSGGLLLLLGLLTLWEVLTPVSS) form the signal peptide. Residues 27-71 (RPKKLGLCPPRPQKPCVKECKNDWSCPGQQKCCNYGCIDECRDPI) enclose the WAP domain. 4 cysteine pairs are disulfide-bonded: cysteine 34/cysteine 59, cysteine 42/cysteine 63, cysteine 46/cysteine 58, and cysteine 52/cysteine 67.

Belongs to the venom waprin family. In terms of tissue distribution, expressed by the venom gland.

The protein localises to the secreted. Functionally, damages membranes of susceptible bacteria. Has no hemolytic activity. Not toxic to mice. Does not inhibit the proteinases elastase and cathepsin G. The chain is Porwaprin-a from Pseudechis porphyriacus (Red-bellied black snake).